A 367-amino-acid chain; its full sequence is Biotin synthase (367 aa).

Residues 67-291 (NAVQISTLLS…IAVTRICCPS (225 aa)) form the Radical SAM core domain. Residues C82, C86, and C89 each coordinate [4Fe-4S] cluster. [2Fe-2S] cluster contacts are provided by C128, C159, C219, and R295.

This sequence belongs to the radical SAM superfamily. Biotin synthase family. In terms of assembly, homodimer. It depends on [4Fe-4S] cluster as a cofactor. [2Fe-2S] cluster serves as cofactor.

It catalyses the reaction (4R,5S)-dethiobiotin + (sulfur carrier)-SH + 2 reduced [2Fe-2S]-[ferredoxin] + 2 S-adenosyl-L-methionine = (sulfur carrier)-H + biotin + 2 5'-deoxyadenosine + 2 L-methionine + 2 oxidized [2Fe-2S]-[ferredoxin]. The protein operates within cofactor biosynthesis; biotin biosynthesis; biotin from 7,8-diaminononanoate: step 2/2. Catalyzes the conversion of dethiobiotin (DTB) to biotin by the insertion of a sulfur atom into dethiobiotin via a radical-based mechanism. The polypeptide is Biotin synthase (Psychrobacter sp. (strain PRwf-1)).